An 81-amino-acid chain; its full sequence is Putative defensin-like protein 265 (81 aa).

An N-terminal signal peptide occupies residues 1-26; sequence MEKTVSRKVVVLAILLSLSCLCIAKA. Cystine bridges form between C48–C66, C54–C71, and C58–C73.

The protein belongs to the DEFL family.

The protein resides in the secreted. In Arabidopsis thaliana (Mouse-ear cress), this protein is Putative defensin-like protein 265.